The sequence spans 114 residues: Procyclic form-specific polypeptide A-alpha (114 aa).

The signal sequence occupies residues 1 to 27; it reads MAPRSLYLLAILLFSANLFAGVGFAAA. Positions 33 to 95 are disordered; that stretch reads SNVIVKGGKG…EPEPEPGAAT (63 aa). Positions 47 to 89 are enriched in acidic residues; the sequence is DGPEEPEETGPEETGPEETGPEETGPEETGPEETGPEETEPEP. Tandem repeats lie at residues 48–52, 56–60, 61–65, 66–70, 71–75, 76–80, and 81–85. The interval 48–85 is 7 X 5 AA tandem repeats of G-P-E-E-[PT]; it reads GPEEPEETGPEETGPEETGPEETGPEETGPEETGPEET. Glycine 92 carries the GPI-anchor amidated glycine lipid modification. A propeptide spanning residues 93–114 is cleaved from the precursor; the sequence is AATLKSVALPFAVAAAALVAAF.

Its subcellular location is the cell membrane. Its function is as follows. Major surface antigen of procyclic forms. The polypeptide is Procyclic form-specific polypeptide A-alpha (PARPA-ALPHA) (Trypanosoma brucei brucei).